The following is a 148-amino-acid chain: UPF0134 protein MPN_410 (148 aa).

Belongs to the UPF0134 family.

The protein is UPF0134 protein MPN_410 of Mycoplasma pneumoniae (strain ATCC 29342 / M129 / Subtype 1) (Mycoplasmoides pneumoniae).